The chain runs to 128 residues: Cyclic ether formation enzyme gkaZ (128 aa).

The first 36 residues, 1–36, serve as a signal peptide directing secretion; the sequence is MTTARALSDGLAYLLACFNAFCIQAHLTSRFSPAFS. Transmembrane regions (helical) follow at residues 61–81 and 107–127; these read LRYMFVSLNAGLGLLLALPGW and WLLHFLSHLVLLSITMAAIYV.

Belongs to the cyclic ether formation enzyme xenC family.

It localises to the membrane. It participates in mycotoxin biosynthesis. Cyclic ether formation enzyme; part of the gene cluster that mediates the biosynthesis of GKK1032, fungal natural products containing a macrocyclic para-cyclophane connected to a decahydrofluorene ring system that show potent antitumor activities. Within the pathway, gkaZ functions synergistically with gkaB and gkaX to form the cyclophane. The pathway begins with the PKS-NRPS gkaA which, with the help of the trans-enoyl reductase gkaC, synthesizes the polyketide-tyrosyl acyl thioester product which can be reductively off-loaded by the terminal reductase (R) domain in gkaA. The alpha/beta hydrolase gkaG is then required to catalyze the subsequent Knoevenagel condensation that affords the 3-pyrrolin-2-one ring, whereas the three proteins gkaB, gkaX and gkaZ then function synergistically to form the cyclophane. This chain is Cyclic ether formation enzyme gkaZ, found in Penicillium citrinum.